We begin with the raw amino-acid sequence, 194 residues long: Translationally-controlled tumor protein homolog 2 (194 aa).

The TCTP domain maps to 1-194; that stretch reads MKLYKDLIGN…IKYGLLQVDV (194 aa).

It belongs to the TCTP family.

Its subcellular location is the cytoplasm. Functionally, involved in calcium binding and microtubule stabilization. The protein is Translationally-controlled tumor protein homolog 2 of Dictyostelium discoideum (Social amoeba).